Reading from the N-terminus, the 155-residue chain is Large ribosomal subunit protein uL11 (155 aa).

Belongs to the universal ribosomal protein uL11 family. As to quaternary structure, part of the ribosomal stalk of the 50S ribosomal subunit. Interacts with L10 and the large rRNA to form the base of the stalk. L10 forms an elongated spine to which L12 dimers bind in a sequential fashion forming a multimeric L10(L12)X complex. One or more lysine residues are methylated.

In terms of biological role, forms part of the ribosomal stalk which helps the ribosome interact with GTP-bound translation factors. This is Large ribosomal subunit protein uL11 from Malacoplasma penetrans (strain HF-2) (Mycoplasma penetrans).